A 366-amino-acid chain; its full sequence is Leucine-rich repeat-containing protein 58 (366 aa).

Ser19 bears the Phosphoserine mark. LRR repeat units lie at residues 40 to 61 (ALLR…LGGG), 64 to 86 (HLQL…LTLS), 87 to 108 (GLRT…PKGL), 116 to 138 (SLQV…LELR), 139 to 161 (ALQT…ENLR), 162 to 184 (SLEC…ANLP), 185 to 206 (SLNY…LSQL), 208 to 229 (SLRS…ILNL), and 231 to 251 (HLEE…RDLT). Residues 337 to 346 (ASHSSTSQSE) show a composition bias toward low complexity. The tract at residues 337-356 (ASHSSTSQSESDSEDEASVA) is disordered.

This is Leucine-rich repeat-containing protein 58 (Lrrc58) from Mus musculus (Mouse).